A 248-amino-acid polypeptide reads, in one-letter code: tRNA pseudouridine synthase A (248 aa).

Catalysis depends on D53, which acts as the Nucleophile. Residue Y116 participates in substrate binding.

Belongs to the tRNA pseudouridine synthase TruA family. In terms of assembly, homodimer.

The catalysed reaction is uridine(38/39/40) in tRNA = pseudouridine(38/39/40) in tRNA. Formation of pseudouridine at positions 38, 39 and 40 in the anticodon stem and loop of transfer RNAs. The sequence is that of tRNA pseudouridine synthase A from Helicobacter hepaticus (strain ATCC 51449 / 3B1).